Reading from the N-terminus, the 2005-residue chain is Sodium channel protein type 2 subunit alpha (2005 aa).

Topologically, residues 1-129 are cytoplasmic; that stretch reads MARSVLVPPG…KLAIKILVHS (129 aa). Serine 4 carries the post-translational modification Phosphoserine. The disordered stretch occupies residues 28 to 61; the sequence is RIAEEKAKRPKQERKDEDDENGPKPNSDLEAGKS. A Glycyl lysine isopeptide (Lys-Gly) (interchain with G-Cter in SUMO1) cross-link involves residue lysine 38. The stretch at 111–456 is one I repeat; the sequence is ILTPFNPIRK…QQMLEQLKKQ (346 aa). Residues 130–148 traverse the membrane as a helical segment; the sequence is LFNVLIMCTILTNCVFMTM. Over 149 to 155 the chain is Extracellular; sequence SNPPDWT. A helical transmembrane segment spans residues 156–176; that stretch reads KNVEYTFTGIYTFESLIKILA. Over 177-190 the chain is Cytoplasmic; sequence RGFCLEDFTFLRNP. Residues 191–208 form a helical membrane-spanning segment; that stretch reads WNWLDFTVITFAYVTEFV. Over 209-214 the chain is Extracellular; it reads NLGNVS. Asparagine 212 is a glycosylation site (N-linked (GlcNAc...) asparagine). A helical transmembrane segment spans residues 215–231; the sequence is ALRTFRVLRALKTISVI. Residues 232 to 250 are Cytoplasmic-facing; the sequence is PGLKTIVGALIQSVKKLSD. Residues 251-270 traverse the membrane as a helical segment; the sequence is VMILTVFCLSVFALIGLQLF. Topologically, residues 271–369 are extracellular; the sequence is MGNLRNKCLQ…PNYGYTSFDT (99 aa). Cysteine 278 and cysteine 338 are joined by a disulfide. N-linked (GlcNAc...) asparagine glycans are attached at residues asparagine 285, asparagine 291, asparagine 297, asparagine 303, asparagine 308, and asparagine 340. The segment at residues 370-394 is an intramembrane region (pore-forming); it reads FSWAFLSLFRLMTQDFWENLYQLTL. The Extracellular segment spans residues 395–401; the sequence is RAAGKTY. A helical membrane pass occupies residues 402–422; that stretch reads MIFFVLVIFLGSFYLINLILA. At 423 to 759 the chain is on the cytoplasmic side; it reads VVAMAYEEQN…HVVNLVVMDP (337 aa). A phosphoserine mark is found at serine 468, serine 471, serine 484, serine 526, serine 528, serine 531, serine 553, serine 554, and serine 558. The disordered stretch occupies residues 494 to 529; the sequence is SSKSEKELKNRRKKKKQKEQAGEEEKEDAVRKSASE. Over residues 511 to 529 the composition is skewed to basic and acidic residues; that stretch reads KEQAGEEEKEDAVRKSASE. The residue at position 554 (serine 554) is a Phosphoserine; by PKC; in vitro. 2 positions are modified to phosphoserine; by PKC; in vitro: serine 573 and serine 576. A phosphoserine mark is found at serine 589, serine 610, serine 623, serine 687, serine 688, and serine 721. The interval 591 to 634 is disordered; the sequence is NDFADDEHSTFEDNDSRRDSLFVPHRHGERRPSNVSQASRASRG. The span at 596–610 shows a compositional bias: basic and acidic residues; sequence DEHSTFEDNDSRRDS. An II repeat occupies 741–1013; it reads CCKPWLKVKH…QIAVGRMQKG (273 aa). A helical membrane pass occupies residues 760-778; sequence FVDLAITICIVLNTLFMAM. Residues 779–789 lie on the Extracellular side of the membrane; sequence EHYPMTEQFSS. Residues 790–809 form a helical membrane-spanning segment; sequence VLSVGNLVFTGIFTAEMFLK. The Cytoplasmic segment spans residues 810-823; the sequence is IIAMDPYYYFQEGW. A helical transmembrane segment spans residues 824 to 843; the sequence is NIFDGFIVSLSLMELGLANV. Topologically, residues 844–845 are extracellular; it reads EG. The helical transmembrane segment at 846–863 threads the bilayer; the sequence is LSVLRSFRLLRVFKLAKS. The Cytoplasmic portion of the chain corresponds to 864–879; that stretch reads WPTLNMLIKIIGNSVG. Residues 880–898 form a helical membrane-spanning segment; it reads ALGNLTLVLAIIVFIFAVV. At 899 to 927 the chain is on the extracellular side; that stretch reads GMQLFGKSYKECVCKISNDCELPRWHMHH. Cysteine 912 and cysteine 918 are oxidised to a cystine. Positions 917–918 are binds SCN2B; that stretch reads DC. The segment at residues 928 to 948 is an intramembrane region (pore-forming); sequence FFHSFLIVFRVLCGEWIETMW. Topologically, residues 949-961 are extracellular; it reads DCMEVAGQTMCLT. Cysteine 950 and cysteine 959 are disulfide-bonded. Residues 962 to 982 form a helical membrane-spanning segment; it reads VFMMVMVIGNLVVLNLFLALL. The Cytoplasmic portion of the chain corresponds to 983 to 1209; the sequence is LSSFSSDNLA…TCYKIVEHNW (227 aa). The segment at 1120-1166 is disordered; that stretch reads EEFSSESDMEESKEKLNATSSSEGSTVDIGAPAEGEQPEAEPEESLE. Residues 1155-1166 are compositionally biased toward acidic residues; it reads EQPEAEPEESLE. Residues 1190–1504 form an III repeat; that stretch reads KGKLWWNLRK…KKYYNAMKKL (315 aa). A helical membrane pass occupies residues 1210 to 1227; sequence FETFIVFMILLSSGALAF. Topologically, residues 1228 to 1240 are extracellular; that stretch reads EDIYIEQRKTIKT. A helical membrane pass occupies residues 1241–1259; sequence MLEYADKVFTYIFILEMLL. Over 1260-1273 the chain is Cytoplasmic; it reads KWVAYGFQMYFTNA. Residues 1274–1292 form a helical membrane-spanning segment; it reads WCWLDFLIVDVSLVSLTAN. Residues 1293 to 1300 lie on the Extracellular side of the membrane; it reads ALGYSELG. A helical transmembrane segment spans residues 1301–1319; the sequence is AIKSLRTLRALRPLRALSR. Over 1320-1336 the chain is Cytoplasmic; it reads FEGMRVVVNALLGAIPS. The chain crosses the membrane as a helical span at residues 1337-1356; the sequence is IMNVLLVCLIFWLIFSIMGV. Residues 1357–1408 are Extracellular-facing; sequence NLFAGKFYHCINYTTGEMFDVSVVNNYSECQALIESNQTARWKNVKVNFDNV. Cysteine 1366 and cysteine 1386 are disulfide-bonded. N-linked (GlcNAc...) asparagine glycans are attached at residues asparagine 1368, asparagine 1382, and asparagine 1393. The pore-forming intramembrane region spans 1409-1430; it reads GLGYLSLLQVATFKGWMDIMYA. The Extracellular segment spans residues 1431 to 1447; that stretch reads AVDSRNVELQPKYEDNL. The helical transmembrane segment at 1448–1469 threads the bilayer; the sequence is YMYLYFVIFIIFGSFFTLNLFI. The Cytoplasmic segment spans residues 1470–1532; it reads GVIIDNFNQQ…MVFDFVTKQV (63 aa). Serine 1506 is modified (phosphoserine; by PKC). Residues 1513-1811 form an IV repeat; the sequence is IPRPANKFQG…WEKFDPDATQ (299 aa). A helical membrane pass occupies residues 1533 to 1550; it reads FDISIMILICLNMVTMMV. Residues 1551 to 1561 are Extracellular-facing; sequence ETDDQSQEMTN. A helical membrane pass occupies residues 1562–1580; the sequence is ILYWINLVFIVLFTGECVL. Over 1581-1592 the chain is Cytoplasmic; that stretch reads KLISLRHYYFTI. Residues 1593–1610 form a helical membrane-spanning segment; sequence GWNIFDFVVVILSIVGMF. Residues 1611–1623 lie on the Extracellular side of the membrane; that stretch reads LAELIEKYFVSPT. The chain crosses the membrane as a helical span at residues 1624 to 1640; sequence LFRVIRLARIGRILRLI. Over 1641–1659 the chain is Cytoplasmic; sequence KGAKGIRTLLFALMMSLPA. The helical transmembrane segment at 1660–1677 threads the bilayer; the sequence is LFNIGLLLFLVMFIYAIF. Residues 1678 to 1699 are Extracellular-facing; that stretch reads GMSNFAYVKREVGIDDMFNFET. An intramembrane region (pore-forming) is located at residues 1700–1722; the sequence is FGNSMICLFQITTSAGWDGLLAP. Over 1723–1752 the chain is Extracellular; that stretch reads ILNSGPPDCDPEKDHPGSSVKGDCGNPSVG. Cysteine 1731 and cysteine 1746 are disulfide-bonded. A helical membrane pass occupies residues 1753-1775; sequence IFFFVSYIIISFLVVVNMYIAVI. The Cytoplasmic segment spans residues 1776–2005; that stretch reads LENFSVATEE…KGKDIRESKK (230 aa). Residues 1905 to 1934 enclose the IQ domain; sequence EEVSAIVIQRAYRRYLLKQKVKKVSSIYKK. Serine 1930 carries the post-translational modification Phosphoserine. Residues 1933–1964 show a composition bias toward basic and acidic residues; sequence KKDKGKEDEGTPIKEDIITDKLNENSTPEKTD. The segment at 1933 to 2005 is disordered; sequence KKDKGKEDEG…KGKDIRESKK (73 aa). Threonine 1943, threonine 1963, and threonine 1966 each carry phosphothreonine. Phosphoserine is present on serine 1971. A compositionally biased stretch (basic and acidic residues) spans 1979-2005; sequence TKPEKEKFEKDKSEKEDKGKDIRESKK.

This sequence belongs to the sodium channel (TC 1.A.1.10) family. Nav1.2/SCN2A subfamily. Heterooligomer of a large alpha subunit and a smaller beta subunit. Heterooligomer with SCN2B or SCN4B; disulfide-linked. Heterooligomer with SCN1B or SCN3B; non-covalently linked. Interacts with NEDD4L. Interacts with CALM. Interacts with TMEM233. Interacts with the conotoxin GVIIJ. Interacts with the scorpion toxin BMK M1. In terms of processing, may be ubiquitinated by NEDD4L; which would promote its endocytosis. Phosphorylation at Ser-1506 by PKC in a highly conserved cytoplasmic loop slows inactivation of the sodium channel and reduces peak sodium currents. Post-translationally, sumoylated at Lys-38. Sumoylation is induced by hypoxia, increases voltage-gated sodium current and mediates the early response to acute hypoxia in neurons. Sumoylated SCN2A is located at the cell membrane. In terms of tissue distribution, expressed in brain (at protein level). Expressed in cerebellar granule neurons (at protein level).

The protein resides in the cell membrane. It carries out the reaction Na(+)(in) = Na(+)(out). In terms of biological role, mediates the voltage-dependent sodium ion permeability of excitable membranes. Assuming opened or closed conformations in response to the voltage difference across the membrane, the protein forms a sodium-selective channel through which Na(+) ions may pass in accordance with their electrochemical gradient. Implicated in the regulation of hippocampal replay occurring within sharp wave ripples (SPW-R) important for memory. The protein is Sodium channel protein type 2 subunit alpha of Rattus norvegicus (Rat).